We begin with the raw amino-acid sequence, 616 residues long: MEALPPQVLKPLDCMSIYSRHREPENRHNELSTGRCGRGHVIFSSMKALQPQVLKPTGSHANLQQVLYAPAATIITAPASSHNDLSSLTGCSYAGVETLGKELFIYFGLKAMRVHFGMNGSMRINQPMKKGQENGRPIPIAVLEVQLTKDLICFYESTVDVRNASECQEKIRFFEELDVCSSKFSFPRAECEIKKQRTRMLCDILLDQMILPGVGNIIKNEALFDSGLHPGVQAGLLTDEQVSHLVKMTRDFTLLFYKCRKSGSALYKHYKVYKRPNCGQCGTKITVCRLGEHNRMTYFCPKCQKDKPQHVDVSKLPTRNSLIGWVQRTASNANEHVATSKEEHWACAVCTLINKPSDKQCDACLTLRPEVSSLAVSDEAAELNTDLVKYPCNNFAKVLPELKLNRRTAFGNTTLVLTDFGAKEGLADKNSQQNILNRSTFDVPLNNKYYHTKTPSNKRSNENEHWTNTLNAVNGHSAASNNVFNHPQKKLKTGHTTSNTIHLSSTISSPQSKMTGDAAAKTGNPQCSAHNVPCALQVVRKEGENKGRSFYTCSLPRERRCQYFEWADLHFPFCNHGKRCIVRTVLKIGPNNGKNFYVCPMGKDKQCNFFEWAKTE.

The FPG-type zinc-finger motif lies at 271–305; it reads KVYKRPNCGQCGTKITVCRLGEHNRMTYFCPKCQK. The segment at 341 to 370 adopts a RanBP2-type zinc-finger fold; it reads KEEHWACAVCTLINKPSDKQCDACLTLRPE. The segment at 491-524 is disordered; it reads LKTGHTTSNTIHLSSTISSPQSKMTGDAAAKTGN. A compositionally biased stretch (polar residues) spans 494 to 514; that stretch reads GHTTSNTIHLSSTISSPQSKM. Residues C527, H530, C553, C561, C574, H576, C599, and C607 each coordinate Zn(2+). GRF-type zinc fingers lie at residues 527–570 and 574–616; these read CSAH…ADLH and CNHG…AKTE.

This sequence belongs to the FPG family.

It localises to the nucleus. It is found in the chromosome. It carries out the reaction 2'-deoxyribonucleotide-(2'-deoxyribose 5'-phosphate)-2'-deoxyribonucleotide-DNA = a 3'-end 2'-deoxyribonucleotide-(2,3-dehydro-2,3-deoxyribose 5'-phosphate)-DNA + a 5'-end 5'-phospho-2'-deoxyribonucleoside-DNA + H(+). Its function is as follows. DNA glycosylase which prefers single-stranded DNA (ssDNA), or partially ssDNA structures such as bubble and fork structures, to double-stranded DNA (dsDNA). Mediates interstrand cross-link repair in response to replication stress: recruited to replication stress sites via interaction with ubiquitinated CMG helicase and acts by mediating DNA glycosylase activity. Cleaves one of the two N-glycosyl bonds comprising the interstrand cross-link, which avoids the formation of a double-strand break but generates an abasic site that is bypassed by translesion synthesis polymerases. The protein is Endonuclease 8-like 3 of Xenopus laevis (African clawed frog).